We begin with the raw amino-acid sequence, 272 residues long: tRNA pseudouridine synthase B (272 aa).

Catalysis depends on Asp38, which acts as the Nucleophile.

Belongs to the pseudouridine synthase TruB family. Type 1 subfamily.

It carries out the reaction uridine(55) in tRNA = pseudouridine(55) in tRNA. Functionally, responsible for synthesis of pseudouridine from uracil-55 in the psi GC loop of transfer RNAs. This Campylobacter jejuni subsp. jejuni serotype O:23/36 (strain 81-176) protein is tRNA pseudouridine synthase B.